We begin with the raw amino-acid sequence, 244 residues long: 1-(5-phosphoribosyl)-5-[(5-phosphoribosylamino)methylideneamino] imidazole-4-carboxamide isomerase (244 aa).

Asp8 serves as the catalytic Proton acceptor. The Proton donor role is filled by Asp130.

Belongs to the HisA/HisF family.

Its subcellular location is the cytoplasm. The catalysed reaction is 1-(5-phospho-beta-D-ribosyl)-5-[(5-phospho-beta-D-ribosylamino)methylideneamino]imidazole-4-carboxamide = 5-[(5-phospho-1-deoxy-D-ribulos-1-ylimino)methylamino]-1-(5-phospho-beta-D-ribosyl)imidazole-4-carboxamide. It functions in the pathway amino-acid biosynthesis; L-histidine biosynthesis; L-histidine from 5-phospho-alpha-D-ribose 1-diphosphate: step 4/9. This Syntrophomonas wolfei subsp. wolfei (strain DSM 2245B / Goettingen) protein is 1-(5-phosphoribosyl)-5-[(5-phosphoribosylamino)methylideneamino] imidazole-4-carboxamide isomerase.